Consider the following 579-residue polypeptide: XK-related protein 7 (579 aa).

Residues 1–18 (MAAKSDGAAASAGPDPEG) show a composition bias toward low complexity. The disordered stretch occupies residues 1–40 (MAAKSDGAAASAGPDPEGAAGGARGSAGGRGEAAAAAGPP). Residues 19–31 (AAGGARGSAGGRG) are compositionally biased toward gly residues. 2 helical membrane passes run 59-79 (WVLCALLVFFSDGATDLWLAA) and 89-109 (YFSLTLLFVLLPSLVVQLLSF). The tract at residues 146 to 165 (GAFRTKEGSPEPGPQPAPSS) is disordered. 5 helical membrane-spanning segments follow: residues 260 to 280 (LLPALSTSASLVSLAWTLASY), 314 to 334 (GLAFALFASVYKLYFGICIVG), 355 to 375 (GEEIIYNMVVGIIYIFCWFNV), 384 to 404 (MTLYHCIVLLENAALTGFWYS), and 415 to 435 (LIMVCVVASSFALGIFFMCVY). Residues 466–510 (ADAITSPPRSLPRTTGAERDGASAGERAGTPTPPVFQVRPGLPPT) form a disordered region.

This sequence belongs to the XK family.

The protein resides in the cell membrane. The protein is XK-related protein 7 (XKR7) of Pan troglodytes (Chimpanzee).